Here is a 140-residue protein sequence, read N- to C-terminus: Transmembrane protein 234 homolog (140 aa).

A run of 4 helical transmembrane segments spans residues 14–34, 64–84, 88–108, and 116–136; these read IYAV…NPFI, WQYL…VLTL, ELSL…AITA, and SGWK…ICGL.

It belongs to the TMEM234 family.

The protein localises to the membrane. The protein is Transmembrane protein 234 homolog of Anopheles gambiae (African malaria mosquito).